Consider the following 443-residue polypeptide: ATP-dependent protease ATPase subunit HslU (443 aa).

Residues Ile-18, 60-65 (GVGKTE), Asp-256, Glu-321, and Arg-393 contribute to the ATP site.

It belongs to the ClpX chaperone family. HslU subfamily. In terms of assembly, a double ring-shaped homohexamer of HslV is capped on each side by a ring-shaped HslU homohexamer. The assembly of the HslU/HslV complex is dependent on binding of ATP.

It is found in the cytoplasm. Functionally, ATPase subunit of a proteasome-like degradation complex; this subunit has chaperone activity. The binding of ATP and its subsequent hydrolysis by HslU are essential for unfolding of protein substrates subsequently hydrolyzed by HslV. HslU recognizes the N-terminal part of its protein substrates and unfolds these before they are guided to HslV for hydrolysis. This chain is ATP-dependent protease ATPase subunit HslU, found in Buchnera aphidicola subsp. Schizaphis graminum (strain Sg).